Here is a 355-residue protein sequence, read N- to C-terminus: 12-oxophytodienoate reductase-like protein (355 aa).

FMN contacts are provided by residues 30-32, A63, and Q105; that span reads ALT. 175-178 serves as a coordination point for substrate; it reads NASS. Y181 serves as the catalytic Proton donor. Residue R265 coordinates substrate. FMN-binding positions include G288 and 309 to 310; that span reads GR.

It belongs to the NADH:flavin oxidoreductase/NADH oxidase family. It depends on FMN as a cofactor. Weakly expressed in flowers and roots.

The protein resides in the cytoplasm. Functionally, may be involved in the biosynthesis or metabolism of oxylipin signaling molecules. This is 12-oxophytodienoate reductase-like protein (OPR2) from Solanum lycopersicum (Tomato).